We begin with the raw amino-acid sequence, 467 residues long: tRNA dimethylallyltransferase (467 aa).

The transit peptide at 1–47 (MASVAAARAVPVGSGLRGLQRTLPLVVILGATGTGKSTLALQLGQRL) directs the protein to the mitochondrion. 32-37 (TGTGKS) lines the dimethylallyl diphosphate pocket. 2 interaction with substrate tRNA regions span residues 55-58 (DSMQ) and 183-187 (RKVAR). The interval 221 to 230 (FSNPCILWLH) is core aggregation region. Residues 233–255 (QAVLDERLDKRVDDMLAAGLLEE) are interaction with isopentenylpyrophosphate transferase. Interaction with substrate tRNA regions lie at residues 281–283 (QSI) and 313–331 (ALKQVTKRYARKQNRWVKN). Residues 395–425 (HLCDLCDRIIIGDREWAAHIKSKSHLNQLKK) form a Matrin-type zinc finger. Residues 429–467 (LDSDAVNTIESQSVSPDHNKEPKEKGSPGQNDQELKCSV) are disordered. Polar residues predominate over residues 433–444 (AVNTIESQSVSP). The residue at position 443 (Ser443) is a Phosphoserine. A compositionally biased stretch (basic and acidic residues) spans 445-454 (DHNKEPKEKG). The residue at position 455 (Ser455) is a Phosphoserine.

It belongs to the IPP transferase family.

Its subcellular location is the mitochondrion. It localises to the cytoplasm. It catalyses the reaction adenosine(37) in tRNA + dimethylallyl diphosphate = N(6)-dimethylallyladenosine(37) in tRNA + diphosphate. Catalyzes the transfer of a dimethylallyl group onto the adenine at position 37 of both cytosolic and mitochondrial tRNAs, leading to the formation of N6-(dimethylallyl)adenosine (i6A37). Mediates modification of a limited subset of tRNAs: tRNA(Ser)(AGA), tRNA(Ser)(CGA), tRNA(Ser)(UGA), as well as partial modification of the selenocysteine tRNA(Ser)(UCA). TRIT1 is therefore required for selenoprotein expression. The polypeptide is tRNA dimethylallyltransferase (TRIT1) (Homo sapiens (Human)).